The sequence spans 195 residues: Putative manganese efflux pump MntP (195 aa).

6 helical membrane-spanning segments follow: residues 4 to 24, 39 to 59, 64 to 84, 120 to 140, 145 to 165, and 175 to 195; these read ILIT…SLAM, FVLT…NLGL, FLGV…GWQM, ILLL…TLGT, ILIT…VGFA, and GSYA…KFVV.

It belongs to the MntP (TC 9.B.29) family.

It is found in the cell membrane. Probably functions as a manganese efflux pump. The polypeptide is Putative manganese efflux pump MntP (Syntrophomonas wolfei subsp. wolfei (strain DSM 2245B / Goettingen)).